The following is a 182-amino-acid chain: Peptidoglycan L,D-endopeptidase MepK (182 aa).

Residues 1 to 30 (MDKFDANRRKLLALGGVALGAAILPTPAFA) constitute a signal peptide (tat-type signal). Zn(2+) contacts are provided by histidine 133, aspartate 140, and histidine 173.

It belongs to the peptidase M15 family. The cofactor is Zn(2+). In terms of processing, predicted to be exported by the Tat system. The position of the signal peptide cleavage has not been experimentally proven.

It functions in the pathway cell wall biogenesis; cell wall polysaccharide biosynthesis. In terms of biological role, l,D-endopeptidase that cleaves meso-diaminopimelic acid (mDAP)-mDAP cross-links in peptidoglycan. It works in conjunction with other elongation-specific D,D-endopeptidases to make space for efficient incorporation of nascent peptidoglycan strands into the sacculus and thus enable cell wall expansion. This chain is Peptidoglycan L,D-endopeptidase MepK, found in Escherichia coli O157:H7.